A 424-amino-acid chain; its full sequence is Hemagglutinin-esterase (424 aa).

Positions 1–16 (MFLLPRFILVSCIIGS) are cleaved as a signal peptide. The esterase domain 1 stretch occupies residues 7-127 (FILVSCIIGS…SNDIWMQNKG (121 aa)). The Virion surface segment spans residues 17 to 392 (LGFYNPPTNV…PICVYDPLPV (376 aa)). Ser40 functions as the Nucleophile in the catalytic mechanism. Cys44 and Cys65 are oxidised to a cystine. N-linked (GlcNAc...) asparagine; by host glycosylation is found at Asn54, Asn89, Asn114, Asn153, Asn236, and Asn301. 3 disulfide bridges follow: Cys113/Cys162, Cys197/Cys276, and Cys205/Cys249. The interval 128–266 (LFYTQVYKNM…GNYLAISNEL (139 aa)) is receptor binding. The esterase domain 2 stretch occupies residues 267–379 (LLTVPTKAIC…RCPTAADINN (113 aa)). A disulfide bridge links Cys307 with Cys312. The N-linked (GlcNAc...) asparagine; by host glycan is linked to Asn316. Catalysis depends on charge relay system residues Asp326 and His329. Cys347 and Cys371 are oxidised to a cystine. Asn358 is a glycosylation site (N-linked (GlcNAc...) asparagine; by host). The helical transmembrane segment at 393–413 (ILLGILLGVAVIIIVVLLLYF) threads the bilayer. The Intravirion portion of the chain corresponds to 414–424 (MVDNGTRLHDA). Asn417 carries N-linked (GlcNAc...) asparagine; by host glycosylation.

The protein belongs to the influenza type C/coronaviruses hemagglutinin-esterase family. In terms of assembly, homodimer; disulfide-linked. Forms a complex with the M protein in the pre-Golgi. Associates then with S-M complex to form a ternary complex S-M-HE. In terms of processing, N-glycosylated in the host RER.

It is found in the virion membrane. Its subcellular location is the host cell membrane. It carries out the reaction N-acetyl-9-O-acetylneuraminate + H2O = N-acetylneuraminate + acetate + H(+). The catalysed reaction is N-acetyl-4-O-acetylneuraminate + H2O = N-acetylneuraminate + acetate + H(+). Its function is as follows. Structural protein that makes short spikes at the surface of the virus. Contains receptor binding and receptor-destroying activities. Mediates de-O-acetylation of N-acetyl-4-O-acetylneuraminic acid, which is probably the receptor determinant recognized by the virus on the surface of erythrocytes and susceptible cells. This receptor-destroying activity is important for virus release as it probably helps preventing self-aggregation and ensures the efficient spread of the progeny virus from cell to cell. May serve as a secondary viral attachment protein for initiating infection, the spike protein being the major one. May become a target for both the humoral and the cellular branches of the immune system. In Homo sapiens (Human), this protein is Hemagglutinin-esterase.